An 88-amino-acid chain; its full sequence is Small ribosomal subunit protein uS15c (88 aa).

This sequence belongs to the universal ribosomal protein uS15 family. As to quaternary structure, part of the 30S ribosomal subunit.

It is found in the plastid. It localises to the chloroplast. The protein is Small ribosomal subunit protein uS15c (rps15) of Pinus thunbergii (Japanese black pine).